The sequence spans 238 residues: Probable transcriptional regulatory protein SSU05_0402 (238 aa).

It belongs to the TACO1 family. YeeN subfamily.

It localises to the cytoplasm. In Streptococcus suis (strain 05ZYH33), this protein is Probable transcriptional regulatory protein SSU05_0402.